The chain runs to 375 residues: Putative ZDHHC-type palmitoyltransferase 8 (375 aa).

2 helical membrane passes run 4–24 and 40–60; these read LFDFVVLSSFIILLPLVTDFL and VVGMILVFFIVSLIFAGVSLW. Residue N95 is glycosylated (N-linked (GlcNAc...) asparagine). 3 helical membrane-spanning segments follow: residues 105–125, 221–241, and 285–305; these read ITFYFHIFFTIQLVVNLYYYY, FILFIGYTVMALIYACYLSFF, and YSFIFLCCCLIVTASFGILLF. In terms of domain architecture, DHHC spans 176-226; sequence VSDGKWSTINKPKSHHCRICKRCIDSMDHHCPFAANCIGINNHHYFILFIG. N-linked (GlcNAc...) asparagine glycosylation is present at N343.

Belongs to the DHHC palmitoyltransferase family.

It localises to the membrane. The enzyme catalyses L-cysteinyl-[protein] + hexadecanoyl-CoA = S-hexadecanoyl-L-cysteinyl-[protein] + CoA. The polypeptide is Putative ZDHHC-type palmitoyltransferase 8 (Dictyostelium discoideum (Social amoeba)).